The primary structure comprises 172 residues: Translationally-controlled tumor protein homolog (172 aa).

In terms of domain architecture, TCTP spans 1–172; that stretch reads MIIYKDCITE…FKDGLIIEKC (172 aa).

This sequence belongs to the TCTP family.

The protein resides in the cytoplasm. In terms of biological role, involved in calcium binding and microtubule stabilization. This chain is Translationally-controlled tumor protein homolog (tpt1), found in Xenopus laevis (African clawed frog).